Here is a 407-residue protein sequence, read N- to C-terminus: Cysteine desulfurase (407 aa).

K226 is subject to N6-(pyridoxal phosphate)lysine. The active-site Cysteine persulfide intermediate is C364.

The protein belongs to the class-V pyridoxal-phosphate-dependent aminotransferase family. Csd subfamily. As to quaternary structure, homodimer. Interacts with SufE and the SufBCD complex composed of SufB, SufC and SufD. The interaction with SufE is required to mediate the direct transfer of the sulfur atom from the S-sulfanylcysteine. Requires pyridoxal 5'-phosphate as cofactor.

It is found in the cytoplasm. It catalyses the reaction (sulfur carrier)-H + L-cysteine = (sulfur carrier)-SH + L-alanine. It carries out the reaction L-selenocysteine + AH2 = hydrogenselenide + L-alanine + A + H(+). Its pathway is cofactor biosynthesis; iron-sulfur cluster biosynthesis. Functionally, cysteine desulfurases mobilize the sulfur from L-cysteine to yield L-alanine, an essential step in sulfur metabolism for biosynthesis of a variety of sulfur-containing biomolecules. Component of the suf operon, which is activated and required under specific conditions such as oxidative stress and iron limitation. Acts as a potent selenocysteine lyase in vitro, that mobilizes selenium from L-selenocysteine. Selenocysteine lyase activity is however unsure in vivo. This chain is Cysteine desulfurase, found in Pectobacterium carotovorum subsp. carotovorum (strain PC1).